Consider the following 285-residue polypeptide: Sulfotransferase 2A2 (285 aa).

6 residues coordinate 3'-phosphoadenylyl sulfate: Lys-44, Ser-45, Gly-46, Thr-47, Asn-48, and Trp-49. The active-site Proton acceptor is the His-99. 7 residues coordinate 3'-phosphoadenylyl sulfate: Arg-121, Ser-129, Tyr-184, Ser-218, Arg-247, Lys-248, and Gly-249.

The protein belongs to the sulfotransferase 1 family. Detected in liver.

It is found in the cytoplasm. It catalyses the reaction an alcohol + 3'-phosphoadenylyl sulfate = an alkyl sulfate + adenosine 3',5'-bisphosphate + H(+). Functionally, sulfotransferase that utilizes 3'-phospho-5'-adenylyl sulfate (PAPS) as sulfonate donor to catalyze the sulfate conjugation of a potential wide variety of acceptor molecules bearing a hydroxyl group. Sulfonation increases the water solubility of most compounds, and therefore their renal excretion, but it can also result in bioactivation to form active metabolites. The protein is Sulfotransferase 2A2 of Rattus norvegicus (Rat).